We begin with the raw amino-acid sequence, 505 residues long: Facilitated trehalose transporter Tret1 (505 aa).

Residues 1–46 lie on the Cytoplasmic side of the membrane; the sequence is MEMEIKDENLRNSVPFVRQLSTDSVKTKTEYDNEDGTPYKSTTQKL. A helical transmembrane segment spans residues 47 to 67; sequence FLWTQLLAAFAVSVGSMNVGF. The Extracellular portion of the chain corresponds to 68 to 91; sequence SSGYTSPAVLTMNITLDITKEEIT. An N-linked (GlcNAc...) asparagine glycan is attached at Asn80. Residues 92–112 form a helical membrane-spanning segment; the sequence is WVGGLMPLAALVGGIVGGPLI. Residues 113 to 124 lie on the Cytoplasmic side of the membrane; it reads EYLGRKKTIMGT. Residues 125–145 form a helical membrane-spanning segment; that stretch reads AVPFTIGWMLIANAINVVMVF. Over 146 to 149 the chain is Extracellular; it reads AGRV. Residues 150–170 traverse the membrane as a helical segment; it reads ICGVCVGIVSLAFPVYIGETI. The Cytoplasmic portion of the chain corresponds to 171–175; sequence QPEVR. The helical transmembrane segment at 176-196 threads the bilayer; it reads GALGLLPTAFGNTGILLAFLV. The Extracellular portion of the chain corresponds to 197 to 201; that stretch reads GSYLD. The chain crosses the membrane as a helical span at residues 202-222; it reads WSNLAFFGAAIPVPFFLLMIL. Residues 223–286 are Cytoplasmic-facing; it reads TPETPRWYVS…QLFSKRYLPA (64 aa). Residues 287 to 307 traverse the membrane as a helical segment; the sequence is VMISLGLMLFQQLTGINAVIF. The Extracellular portion of the chain corresponds to 308 to 323; the sequence is YAASIFQMSGSSVDEN. The chain crosses the membrane as a helical span at residues 324 to 344; the sequence is LASIIIGVVNFISTFIATMLI. Topologically, residues 345-350 are cytoplasmic; the sequence is DRLGRK. A helical membrane pass occupies residues 351–371; the sequence is VLLYISSVAMITTLLALGAYF. At 372-390 the chain is on the extracellular side; sequence YLKQNHIDVTAYGWLPLAC. The helical transmembrane segment at 391-411 threads the bilayer; it reads LVIYVLGFSIGFGPIPWLMLG. Topologically, residues 412–419 are cytoplasmic; it reads EILPSKIR. The helical transmembrane segment at 420–437 threads the bilayer; that stretch reads GTAASLATGFNWTCTFIV. Topologically, residues 438 to 451 are extracellular; that stretch reads TKTFQNIIDAIYMH. Residues 452–472 traverse the membrane as a helical segment; the sequence is GTLWLFAVICIGGLLFVIFFV. Residues 473–505 are Cytoplasmic-facing; the sequence is PETKGKSLEEIEMKLTSGSRRVRNISKQPENIC.

Belongs to the major facilitator superfamily. Sugar transporter (TC 2.A.1.1) family. Trehalose transporter subfamily. As to expression, expressed in many larval tissues at a low level, moderate levels of expression are seen in testis and head and highest expression in muscle.

It is found in the cell membrane. Functionally, high-capacity facilitative transporter for trehalose. Does not transport maltose, sucrose or lactose. Mediates the bidirectional transfer of trehalose. Responsible for the transport of trehalose synthesized in the fat body and the incorporation of trehalose into other tissues that require a carbon source, thereby regulating trehalose levels in the hemolymph. The protein is Facilitated trehalose transporter Tret1 of Bombyx mori (Silk moth).